Here is a 240-residue protein sequence, read N- to C-terminus: Large ribosomal subunit protein bL25 (240 aa).

Residues 1–24 (MATVMEFKATARPKSGKGAARAER) are disordered.

This sequence belongs to the bacterial ribosomal protein bL25 family. CTC subfamily. Part of the 50S ribosomal subunit; part of the 5S rRNA/L5/L18/L25 subcomplex. Contacts the 5S rRNA. Binds to the 5S rRNA independently of L5 and L18.

This is one of the proteins that binds to the 5S RNA in the ribosome where it forms part of the central protuberance. The chain is Large ribosomal subunit protein bL25 from Rhodopseudomonas palustris (strain HaA2).